Here is a 106-residue protein sequence, read N- to C-terminus: Acylphosphatase-2 (106 aa).

The Acylphosphatase-like domain occupies 16–106; it reads SVDYEVFGTV…LEYSDFSIRY (91 aa). Residues arginine 31 and asparagine 49 contribute to the active site. At serine 100 the chain carries Phosphoserine.

It belongs to the acylphosphatase family.

It carries out the reaction an acyl phosphate + H2O = a carboxylate + phosphate + H(+). The polypeptide is Acylphosphatase-2 (Acyp2) (Mus musculus (Mouse)).